The chain runs to 192 residues: dITP/XTP pyrophosphatase (192 aa).

7–12 contributes to the substrate binding site; the sequence is SNNKNK. D68 acts as the Proton acceptor in catalysis. D68 serves as a coordination point for Mg(2+). Residues T69, 148–151, K171, and 176–177 contribute to the substrate site; these read FGYD and HR.

This sequence belongs to the HAM1 NTPase family. As to quaternary structure, homodimer. Mg(2+) is required as a cofactor.

The enzyme catalyses XTP + H2O = XMP + diphosphate + H(+). The catalysed reaction is dITP + H2O = dIMP + diphosphate + H(+). It carries out the reaction ITP + H2O = IMP + diphosphate + H(+). Pyrophosphatase that catalyzes the hydrolysis of nucleoside triphosphates to their monophosphate derivatives, with a high preference for the non-canonical purine nucleotides XTP (xanthosine triphosphate), dITP (deoxyinosine triphosphate) and ITP. Seems to function as a house-cleaning enzyme that removes non-canonical purine nucleotides from the nucleotide pool, thus preventing their incorporation into DNA/RNA and avoiding chromosomal lesions. The chain is dITP/XTP pyrophosphatase from Flavobacterium johnsoniae (strain ATCC 17061 / DSM 2064 / JCM 8514 / BCRC 14874 / CCUG 350202 / NBRC 14942 / NCIMB 11054 / UW101) (Cytophaga johnsonae).